Here is a 303-residue protein sequence, read N- to C-terminus: D-alanyl-D-alanine carboxypeptidase (303 aa).

A helical transmembrane segment spans residues leucine 7–glutamate 23. The disordered stretch occupies residues aspartate 37 to lysine 56. Substrate is bound by residues tyrosine 154–leucine 156 and serine 161. Residues histidine 163 and aspartate 170 each coordinate Zn(2+). Glutamate 213 serves as the catalytic Proton donor/acceptor. Histidine 216 provides a ligand contact to Zn(2+).

Belongs to the peptidase M15B family. It depends on Zn(2+) as a cofactor.

It localises to the cell membrane. Its activity is regulated as follows. The DD-carboxypeptidase activity is not inhibited by beta-lactam antibiotics. Cleaves the C-terminal D-alanine residue of UDP-muramyl-pentapeptide (UDP-MurNAc-L-Ala-D-Glu-mDAP-D-Ala-D-Ala) or diacetyl-L-Lys-D-Ala-D-Ala. However the physiological substrate likely contains L-Lys instead of mDAP at the third position of the pentapeptide. Also releases the C-terminal D-lactate from UDP-MurNAc-L-Ala-D-Glu-mDAP-D-Ala-D-lactate, a depsipeptide produced by the vancomycin resistance protein VanA. Therefore, VanY should contribute in vivo to the hydrolysis of both the D-alanyl-D-alanine- and the depsipeptide-containing peptidoglycan precursors. Is not necessary for vancomycin resistance of E.faecium BM4147 and perhaps not W14-9. Does not display transpeptidase or beta-lactamase activities. The protein is D-alanyl-D-alanine carboxypeptidase of Enterococcus faecium (Streptococcus faecium).